The chain runs to 1158 residues: ATP-dependent helicase/deoxyribonuclease subunit B (1158 aa).

8–15 (GRAGTGKS) contacts ATP. [4Fe-4S] cluster contacts are provided by cysteine 791, cysteine 1112, cysteine 1115, and cysteine 1121.

This sequence belongs to the helicase family. AddB/RexB type 1 subfamily. In terms of assembly, heterodimer of AddA and AddB. The cofactor is Mg(2+). [4Fe-4S] cluster serves as cofactor.

Functionally, the heterodimer acts as both an ATP-dependent DNA helicase and an ATP-dependent, dual-direction single-stranded exonuclease. Recognizes the chi site generating a DNA molecule suitable for the initiation of homologous recombination. The AddB subunit has 5' -&gt; 3' nuclease activity but not helicase activity. The chain is ATP-dependent helicase/deoxyribonuclease subunit B from Clostridium perfringens (strain SM101 / Type A).